Consider the following 373-residue polypeptide: UDP-N-acetylglucosamine--N-acetylmuramyl-(pentapeptide) pyrophosphoryl-undecaprenol N-acetylglucosamine transferase (373 aa).

UDP-N-acetyl-alpha-D-glucosamine contacts are provided by residues 13 to 15 (TGG), Asn-124, Arg-164, Ser-192, and Gln-293.

The protein belongs to the glycosyltransferase 28 family. MurG subfamily.

It is found in the cell inner membrane. The catalysed reaction is di-trans,octa-cis-undecaprenyl diphospho-N-acetyl-alpha-D-muramoyl-L-alanyl-D-glutamyl-meso-2,6-diaminopimeloyl-D-alanyl-D-alanine + UDP-N-acetyl-alpha-D-glucosamine = di-trans,octa-cis-undecaprenyl diphospho-[N-acetyl-alpha-D-glucosaminyl-(1-&gt;4)]-N-acetyl-alpha-D-muramoyl-L-alanyl-D-glutamyl-meso-2,6-diaminopimeloyl-D-alanyl-D-alanine + UDP + H(+). It functions in the pathway cell wall biogenesis; peptidoglycan biosynthesis. In terms of biological role, cell wall formation. Catalyzes the transfer of a GlcNAc subunit on undecaprenyl-pyrophosphoryl-MurNAc-pentapeptide (lipid intermediate I) to form undecaprenyl-pyrophosphoryl-MurNAc-(pentapeptide)GlcNAc (lipid intermediate II). In Allorhizobium ampelinum (strain ATCC BAA-846 / DSM 112012 / S4) (Agrobacterium vitis (strain S4)), this protein is UDP-N-acetylglucosamine--N-acetylmuramyl-(pentapeptide) pyrophosphoryl-undecaprenol N-acetylglucosamine transferase.